Reading from the N-terminus, the 157-residue chain is Small ribosomal subunit protein uS7 (157 aa).

Belongs to the universal ribosomal protein uS7 family. In terms of assembly, part of the 30S ribosomal subunit. Contacts proteins S9 and S11.

One of the primary rRNA binding proteins, it binds directly to 16S rRNA where it nucleates assembly of the head domain of the 30S subunit. Is located at the subunit interface close to the decoding center, probably blocks exit of the E-site tRNA. The sequence is that of Small ribosomal subunit protein uS7 from Desulfotalea psychrophila (strain LSv54 / DSM 12343).